The following is a 354-amino-acid chain: Probable L-ascorbate-6-phosphate lactonase UlaG (354 aa).

It belongs to the UlaG family. A divalent metal cation is required as a cofactor.

Its subcellular location is the cytoplasm. The enzyme catalyses L-ascorbate 6-phosphate + H2O = 3-dehydro-L-gulonate 6-phosphate. It participates in cofactor degradation; L-ascorbate degradation; D-xylulose 5-phosphate from L-ascorbate: step 1/4. Probably catalyzes the hydrolysis of L-ascorbate-6-P into 3-keto-L-gulonate-6-P. Is essential for L-ascorbate utilization under anaerobic conditions. The polypeptide is Probable L-ascorbate-6-phosphate lactonase UlaG (Escherichia coli (strain SMS-3-5 / SECEC)).